The sequence spans 270 residues: Phosphatidylglycerol--prolipoprotein diacylglyceryl transferase (270 aa).

Transmembrane regions (helical) follow at residues 10–30 (VAVA…LVGI), 56–76 (LIFW…VLFY), 92–112 (WKGG…AWWF), 120–140 (FFQL…AGRI), 175–195 (SQLY…NLYA), 202–222 (MAVS…VEFV), and 237–257 (VTMG…LIWL). R139 serves as a coordination point for a 1,2-diacyl-sn-glycero-3-phospho-(1'-sn-glycerol).

This sequence belongs to the Lgt family.

Its subcellular location is the cell inner membrane. It catalyses the reaction L-cysteinyl-[prolipoprotein] + a 1,2-diacyl-sn-glycero-3-phospho-(1'-sn-glycerol) = an S-1,2-diacyl-sn-glyceryl-L-cysteinyl-[prolipoprotein] + sn-glycerol 1-phosphate + H(+). Its pathway is protein modification; lipoprotein biosynthesis (diacylglyceryl transfer). Its function is as follows. Catalyzes the transfer of the diacylglyceryl group from phosphatidylglycerol to the sulfhydryl group of the N-terminal cysteine of a prolipoprotein, the first step in the formation of mature lipoproteins. The polypeptide is Phosphatidylglycerol--prolipoprotein diacylglyceryl transferase (Pseudomonas savastanoi pv. phaseolicola (strain 1448A / Race 6) (Pseudomonas syringae pv. phaseolicola (strain 1448A / Race 6))).